The chain runs to 145 residues: Cytochrome b (145 aa).

A helical transmembrane segment spans residues 38–58; that stretch reads FFALHFLLPFVLAALALMHLI. Heme b contacts are provided by histidine 42 and histidine 56. Histidine 61 is an a ubiquinone binding site. A helical membrane pass occupies residues 85-105; sequence FIFKDLVTIFIFFIVLSIFVF.

This sequence belongs to the cytochrome b family. Fungal cytochrome b-c1 complex contains 10 subunits; 3 respiratory subunits, 2 core proteins and 5 low-molecular weight proteins. Cytochrome b-c1 complex is a homodimer. The cofactor is heme b.

The protein resides in the mitochondrion inner membrane. In terms of biological role, component of the ubiquinol-cytochrome c reductase complex (complex III or cytochrome b-c1 complex) that is part of the mitochondrial respiratory chain. The b-c1 complex mediates electron transfer from ubiquinol to cytochrome c. Contributes to the generation of a proton gradient across the mitochondrial membrane that is then used for ATP synthesis. This is Cytochrome b (cob) from Aspergillus flavus.